The primary structure comprises 196 residues: Zinc metalloproteinase-disintegrin-like bothrojarin-3 (196 aa).

The Disintegrin domain occupies 2-88 (PPVCGTELLE…DCPTDDIQRN (87 aa)). Residues V4, L9, E11, E14, and D17 each contribute to the Ca(2+) site. 13 cysteine pairs are disulfide-bonded: C5–C34, C16–C29, C18–C24, C28–C51, C42–C48, C47–C73, C60–C80, C67–C99, C92–C104, C111–C161, C126–C168, C139–C149, and C156–C193. Positions 66-68 (ECD) match the D/ECD-tripeptide motif.

Belongs to the venom metalloproteinase (M12B) family. P-III subfamily. P-IIIa sub-subfamily. As to quaternary structure, monomer. Zn(2+) is required as a cofactor. In terms of processing, glycosylated. In terms of tissue distribution, expressed by the venom gland.

The protein resides in the secreted. Its function is as follows. The hemorrhagic metalloproteinase-disintegrin-like bothrojarin-1 is a potent inhibitor of collagen-induced platelet aggregation by blockage of alpha-2/beta-1 (ITGA2/ITGB1) integrin. It does not present any fibrinogen-clotting activity. The polypeptide is Zinc metalloproteinase-disintegrin-like bothrojarin-3 (Bothrops jararaca (Jararaca)).